The primary structure comprises 273 residues: Formamidopyrimidine-DNA glycosylase (273 aa).

P2 (schiff-base intermediate with DNA) is an active-site residue. The active-site Proton donor is the E3. K58 serves as the catalytic Proton donor; for beta-elimination activity. The DNA site is built by H91 and R110. The segment at 238–272 adopts an FPG-type zinc-finger fold; the sequence is QVYGKTGQPCPRCGCLIKKIKVGGRGTHYCPRCQC. Residue R262 is the Proton donor; for delta-elimination activity of the active site.

It belongs to the FPG family. As to quaternary structure, monomer. Zn(2+) is required as a cofactor.

It carries out the reaction Hydrolysis of DNA containing ring-opened 7-methylguanine residues, releasing 2,6-diamino-4-hydroxy-5-(N-methyl)formamidopyrimidine.. It catalyses the reaction 2'-deoxyribonucleotide-(2'-deoxyribose 5'-phosphate)-2'-deoxyribonucleotide-DNA = a 3'-end 2'-deoxyribonucleotide-(2,3-dehydro-2,3-deoxyribose 5'-phosphate)-DNA + a 5'-end 5'-phospho-2'-deoxyribonucleoside-DNA + H(+). Involved in base excision repair of DNA damaged by oxidation or by mutagenic agents. Acts as a DNA glycosylase that recognizes and removes damaged bases. Has a preference for oxidized purines, such as 7,8-dihydro-8-oxoguanine (8-oxoG). Has AP (apurinic/apyrimidinic) lyase activity and introduces nicks in the DNA strand. Cleaves the DNA backbone by beta-delta elimination to generate a single-strand break at the site of the removed base with both 3'- and 5'-phosphates. The chain is Formamidopyrimidine-DNA glycosylase from Streptococcus agalactiae serotype Ia (strain ATCC 27591 / A909 / CDC SS700).